The sequence spans 90 residues: Translation initiation factor IF-1 (90 aa).

Positions 7–76 (KEDVIRMEGT…TRGRIVYRKK (70 aa)) constitute an S1-like domain.

It belongs to the IF-1 family. As to quaternary structure, component of the 30S ribosomal translation pre-initiation complex which assembles on the 30S ribosome in the order IF-2 and IF-3, IF-1 and N-formylmethionyl-tRNA(fMet); mRNA recruitment can occur at any time during PIC assembly.

It is found in the cytoplasm. Its function is as follows. One of the essential components for the initiation of protein synthesis. Stabilizes the binding of IF-2 and IF-3 on the 30S subunit to which N-formylmethionyl-tRNA(fMet) subsequently binds. Helps modulate mRNA selection, yielding the 30S pre-initiation complex (PIC). Upon addition of the 50S ribosomal subunit IF-1, IF-2 and IF-3 are released leaving the mature 70S translation initiation complex. The sequence is that of Translation initiation factor IF-1 from Fervidobacterium nodosum (strain ATCC 35602 / DSM 5306 / Rt17-B1).